A 240-amino-acid chain; its full sequence is uncharacterized protein (240 aa).

Residues 1-11 are compositionally biased toward basic residues; the sequence is MGMTPRRKRRG. The disordered stretch occupies residues 1–32; sequence MGMTPRRKRRGGAVQITRPTGRPRTPTTQTTK. Positions 17 to 31 are enriched in low complexity; sequence TRPTGRPRTPTTQTT. The next 6 membrane-spanning stretches (helical) occupy residues 36–56, 93–113, 115–135, 146–166, 172–192, and 198–218; these read WVVGGTTILTFVALLYLVELI, LMANTIPLLVLGFLMTLAGLS, FVWATAIIWILGGLGTWLIGN, IGASGLIFGWLAFLLVFGLFV, IVIGLVVLFVYGGILLGAMPV, and GVSWQGHLSGAVAGVVAAYLL.

To M.leprae ML1171.

The protein resides in the cell membrane. This is an uncharacterized protein from Mycobacterium tuberculosis (strain CDC 1551 / Oshkosh).